The primary structure comprises 437 residues: GTPase Obg (437 aa).

Positions 2–160 (SMFLDTAKIS…RQLELELKIL (159 aa)) constitute an Obg domain. The OBG-type G domain occupies 161 to 338 (ADVGLVGFPS…LLEATAELLA (178 aa)). GTP-binding positions include 167 to 174 (GFPSVGKS), 192 to 196 (FTTIV), 214 to 217 (DLPG), 284 to 287 (NKMD), and 319 to 321 (SSL). The Mg(2+) site is built by S174 and T194. Residues 359 to 437 (GFAETEKDFE…IGKFEFEFVD (79 aa)) form the OCT domain.

It belongs to the TRAFAC class OBG-HflX-like GTPase superfamily. OBG GTPase family. In terms of assembly, monomer. The cofactor is Mg(2+).

Its subcellular location is the cytoplasm. Its function is as follows. An essential GTPase which binds GTP, GDP and possibly (p)ppGpp with moderate affinity, with high nucleotide exchange rates and a fairly low GTP hydrolysis rate. Plays a role in control of the cell cycle, stress response, ribosome biogenesis and in those bacteria that undergo differentiation, in morphogenesis control. In Streptococcus pyogenes serotype M1, this protein is GTPase Obg.